A 132-amino-acid polypeptide reads, in one-letter code: Small ribosomal subunit protein uS8 (132 aa).

The protein belongs to the universal ribosomal protein uS8 family. As to quaternary structure, part of the 30S ribosomal subunit. Contacts proteins S5 and S12.

One of the primary rRNA binding proteins, it binds directly to 16S rRNA central domain where it helps coordinate assembly of the platform of the 30S subunit. The sequence is that of Small ribosomal subunit protein uS8 from Gluconacetobacter diazotrophicus (strain ATCC 49037 / DSM 5601 / CCUG 37298 / CIP 103539 / LMG 7603 / PAl5).